The chain runs to 780 residues: Cation channel sperm-associated protein 1 (780 aa).

Disordered stretches follow at residues M1–S37, L71–H306, and Q376–T412. Over M1–L447 the chain is Cytoplasmic. The segment covering S110–D122 has biased composition (basic and acidic residues). Residues Q211–P241 are compositionally biased toward basic residues. Residues S261–H284 show a composition bias toward basic and acidic residues. Over residues H285 to Y299 the composition is skewed to basic residues. Basic and acidic residues predominate over residues S387–F401. A compositionally biased stretch (basic residues) spans Q402–T412. The helical transmembrane segment at A448–F469 threads the bilayer. The Extracellular segment spans residues A470 to W478. The helical transmembrane segment at Y479 to I500 threads the bilayer. Residues A501 to F508 are Cytoplasmic-facing. A helical membrane pass occupies residues D509 to T531. Over H532–S540 the chain is Extracellular. A helical membrane pass occupies residues L541–L563. Residues S564 to P581 are Cytoplasmic-facing. The helical transmembrane segment at S582 to L604 threads the bilayer. The Extracellular segment spans residues F605–N615. The helical; Pore-forming intramembrane region spans I616–T628. At L629–W645 the chain is on the extracellular side. The helical transmembrane segment at Y646–V671 threads the bilayer. Residues D672 to N780 are Cytoplasmic-facing.

This sequence belongs to the cation channel sperm-associated (TC 1.A.1.19) family. As to quaternary structure, component of the CatSper complex or CatSpermasome composed of the core pore-forming members CATSPER1, CATSPER2, CATSPER3 and CATSPER4 as well as auxiliary members CATSPERB, CATSPERG, CATSPERD, CATSPERE, CATSPERZ, C2CD6/CATSPERT, TMEM249, TMEM262 and EFCAB9. HSPA1 may be an additional auxiliary complex member. The core complex members CATSPER1, CATSPER2, CATSPER3 and CATSPER4 form a heterotetrameric channel. The auxiliary CATSPERB, CATSPERG, CATSPERD and CATSPERE subunits form a pavilion-like structure over the pore which stabilizes the complex through interactions with CATSPER4, CATSPER3, CATSPER1 and CATSPER2 respectively. TMEM262/CATSPERH interacts with CATSPERB, further stabilizing the complex. C2CD6/CATSPERT interacts at least with CATSPERD and is required for targeting the CatSper complex in the flagellar membrane. Interacts with Ca(v)3.3/CACNA1I, leading to suppression of T-type calcium channel activity. In terms of tissue distribution, testis-specific.

The protein localises to the cell projection. Its subcellular location is the cilium. The protein resides in the flagellum membrane. The enzyme catalyses Ca(2+)(in) = Ca(2+)(out). Its activity is regulated as follows. The CatSper calcium channel is indirectly activated by extracellular progesterone and prostaglandins following the sequence: progesterone &gt; PGF1-alpha = PGE1 &gt; PGA1 &gt; PGE2 &gt;&gt; PGD2. The CatSper calcium channel is directly inhibited by endocannabinoid 2-arachidonoylglycerol (2AG). Indirect activation by progesterone takes place via the following mechanism: progesterone binds and activates the acylglycerol lipase ABHD2, which in turn mediates hydrolysis of 2AG inhibitor, relieving inhibition of the CatSper channel. The primary effect of progesterone activation is to shift voltage dependence towards more physiological, negative membrane potentials; it is not mediated by metabotropic receptors and second messengers. Sperm capacitation enhances the effect of progesterone by providing additional negative shift. Also activated by the elevation of intracellular pH. Its function is as follows. Pore-forming subunit of the CatSper complex, a sperm-specific voltage-gated calcium channel that plays a central role in calcium-dependent physiological responses essential for successful fertilization, such as sperm hyperactivation, acrosome reaction and chemotaxis towards the oocyte. This Homo sapiens (Human) protein is Cation channel sperm-associated protein 1 (CATSPER1).